The following is a 433-amino-acid chain: Enolase (433 aa).

Gln-167 provides a ligand contact to (2R)-2-phosphoglycerate. The active-site Proton donor is Glu-209. Mg(2+) is bound by residues Asp-246, Glu-291, and Asp-318. The (2R)-2-phosphoglycerate site is built by Lys-343, Arg-372, Ser-373, and Lys-394. Residue Lys-343 is the Proton acceptor of the active site.

It belongs to the enolase family. As to quaternary structure, component of the RNA degradosome, a multiprotein complex involved in RNA processing and mRNA degradation. Mg(2+) is required as a cofactor.

Its subcellular location is the cytoplasm. The protein localises to the secreted. It localises to the cell surface. It carries out the reaction (2R)-2-phosphoglycerate = phosphoenolpyruvate + H2O. It functions in the pathway carbohydrate degradation; glycolysis; pyruvate from D-glyceraldehyde 3-phosphate: step 4/5. In terms of biological role, catalyzes the reversible conversion of 2-phosphoglycerate (2-PG) into phosphoenolpyruvate (PEP). It is essential for the degradation of carbohydrates via glycolysis. The protein is Enolase of Hamiltonella defensa subsp. Acyrthosiphon pisum (strain 5AT).